A 272-amino-acid polypeptide reads, in one-letter code: Acidic leucine-rich nuclear phosphoprotein 32 family member B (272 aa).

LRR repeat units lie at residues 18–38, 43–64, 65–87, and 89–110; these read AVRE…EGLT, NLEF…PKLP, KLKK…AEEL, and SLTH…EPLK. Residues 123-161 enclose the LRRCT domain; that stretch reads CEVTNRSDYRETVFRLLPQLSYLDGYDREDQEAPDSDVE. The segment covering 149–254 has biased composition (acidic residues); that stretch reads DREDQEAPDS…DEDEDEEEEE (106 aa). The interval 149 to 272 is disordered; that stretch reads DREDQEAPDS…RETDDEGEDD (124 aa). Phosphoserine is present on residues S164 and S171. Basic and acidic residues predominate over residues 255 to 265; sequence SGKGEKRKRET. The short motif at 260–263 is the Nuclear localization signal element; the sequence is KRKR. A Phosphothreonine modification is found at T265.

The protein belongs to the ANP32 family. As to quaternary structure, interacts with histones H3 and H4. Interacts with KLF5; this interaction induces promoter region-specific histone incorporation and inhibition of histone acetylation by ANP32B. Post-translationally, some glutamate residues are glycylated by TTLL8. This modification occurs exclusively on glutamate residues and results in a glycine chain on the gamma-carboxyl group. Directly cleaved by caspase-3/CASP3.

Its subcellular location is the nucleus. Functionally, multifunctional protein that is involved in the regulation of many processes including cell proliferation, apoptosis, cell cycle progression or transcription. Regulates the proliferation of neuronal stem cells, differentiation of leukemic cells and progression from G1 to S phase of the cell cycle. As negative regulator of caspase-3-dependent apoptosis, may act as an antagonist of ANP32A in regulating tissue homeostasis. Exhibits histone chaperone properties, able to recruit histones to certain promoters, thus regulating the transcription of specific genes. Also plays an essential role in the nucleocytoplasmic transport of specific mRNAs via the uncommon nuclear mRNA export receptor XPO1/CRM1. Participates in the regulation of adequate adaptive immune responses by acting on mRNA expression and cell proliferation. The chain is Acidic leucine-rich nuclear phosphoprotein 32 family member B (Anp32b) from Mus musculus (Mouse).